A 249-amino-acid chain; its full sequence is Early E1A protein (249 aa).

An interaction with RB1 in competition with E2F1 region spans residues 38-46 (MSLHDLFDV). Positions 74–131 (SAAESGSGDSGVGEELLPVDLDLKCYEDGLPPSDPETDEATEAEEEAAMPTYVNENEN) are interaction with UBE2I. The LXCXE motif, interaction with host RB1 and TMEM173/STING signature appears at 96–100 (LKCYE). A zinc finger lies at 145–165 (CRACDFHRGTSGNPEAMCALC). Positions 180–203 (DAEGESESGSPEDTDFPHPLTATP) are disordered. Acidic residues predominate over residues 181–193 (AEGESESGSPEDT). Positions 238–242 (PLNLS) match the PXDLS motif, CTBP-binding motif. The Nuclear localization signal motif lies at 244–248 (KRPKC).

It belongs to the adenoviridae E1A protein family. Interacts with host UBE2I; this interaction interferes with polySUMOylation. Interacts with host RB1; this interaction induces the aberrant dissociation of RB1-E2F1 complex thereby disrupting the activity of RB1 and activating E2F1-regulated genes. Interacts with host ATF7; the interaction enhances ATF7-mediated viral transactivation activity which requires the zinc binding domains of both proteins. Isoform early E1A 32 kDa protein and isoform early E1A 26 kDa protein interact (via N-terminus) with CUL1 and E3 ubiquitin ligase RBX1; these interactions inhibit RBX1-CUL1-dependent elongation reaction of ubiquitin chains and attenuate ubiquitination of SCF(FBXW7) target proteins. Interacts (via PXLXP motif) with host ZMYND11/BS69 (via MYND-type zinc finger); this interaction inhibits E1A mediated transactivation. Interacts with host EP300; this interaction stimulates the acetylation of RB1 by recruiting EP300 and RB1 into a multimeric-protein complex. Interacts with host CTBP1 and CTBP2; this interaction seems to potentiate viral replication. Interacts with host DCAF7. Interacts with host DYRK1A. Interacts with host KPNA4; this interaction allows E1A import into the host nucleus. Interacts with host EP400; this interaction stabilizes MYC. Interacts with host TBP protein; this interaction probably disrupts the TBP-TATA complex. Interacts (via LXCXE motif) with host TMEM173/STING; this interaction impairs the ability of TMEM173/STING to sense cytosolic DNA and promote the production of type I interferon (IFN-alpha and IFN-beta). Interacts (via C-terminus) with host ZBED1/hDREF (via C-terminus); the interaction is direct.

It is found in the host nucleus. Plays a role in viral genome replication by driving entry of quiescent cells into the cell cycle. Stimulation of progression from G1 to S phase allows the virus to efficiently use the cellular DNA replicating machinery to achieve viral genome replication. E1A protein has both transforming and trans-activating activities. Induces the disassembly of the E2F1 transcription factor from RB1 by direct competition for the same binding site on RB1, with subsequent transcriptional activation of E2F1-regulated S-phase genes and of the E2 region of the adenoviral genome. Release of E2F1 leads to the ARF-mediated inhibition of MDM2 and causes TP53/p53 to accumulate because it is not targeted for degradation by MDM2-mediated ubiquitination anymore. This increase in TP53, in turn, would arrest the cell proliferation and direct its death but this effect is counteracted by the viral protein E1B-55K. Inactivation of the ability of RB1 to arrest the cell cycle is critical for cellular transformation, uncontrolled cellular growth and proliferation induced by viral infection. Interaction with RBX1 and CUL1 inhibits ubiquitination of the proteins targeted by SCF(FBXW7) ubiquitin ligase complex, and may be linked to unregulated host cell proliferation. The tumorigenesis-restraining activity of E1A may be related to the disruption of the host CtBP-CtIP complex through the CtBP binding motif. Interaction with host TMEM173/STING impairs the ability of TMEM173/STING to sense cytosolic DNA and promote the production of type I interferon (IFN-alpha and IFN-beta). Promotes the sumoylation of host ZBED1/hDREF with SUMO1. The chain is Early E1A protein from Homo sapiens (Human).